Here is a 116-residue protein sequence, read N- to C-terminus: MEAPAQLLFLLLLWLPDTTREIVMTQSPPTLSLSPGERVTLSCRASQSVSSSYLTWYQQKPGQAPRLLIYGASTRATSIPARFSGSGSGTDFTLTISSLQPEDFAVYYCQQDYNLP.

Residues 1-21 (MEAPAQLLFLLLLWLPDTTRE) form the signal peptide. The segment at 21-43 (EIVMTQSPPTLSLSPGERVTLSC) is framework-1. The region spanning 22 to 116 (IVMTQSPPTL…YYCQQDYNLP (95 aa)) is the Ig-like domain. Cysteines 43 and 109 form a disulfide. Residues 44–55 (RASQSVSSSYLT) form a complementarity-determining-1 region. The segment at 56–70 (WYQQKPGQAPRLLIY) is framework-2. Residues 71–77 (GASTRAT) are complementarity-determining-2. Residues 78–109 (SIPARFSGSGSGTDFTLTISSLQPEDFAVYYC) are framework-3. The interval 110–116 (QQDYNLP) is complementarity-determining-3.

As to quaternary structure, immunoglobulins are composed of two identical heavy chains and two identical light chains; disulfide-linked.

The protein localises to the secreted. It localises to the cell membrane. Probable non-functional open reading frame (ORF) of V region of the variable domain of immunoglobulin light chains. Non-functional ORF generally cannot participate in the synthesis of a productive immunoglobulin chain due to altered V-(D)-J or switch recombination and/or splicing site (at mRNA level) and/or conserved amino acid change (protein level). Immunoglobulins, also known as antibodies, are membrane-bound or secreted glycoproteins produced by B lymphocytes. In the recognition phase of humoral immunity, the membrane-bound immunoglobulins serve as receptors which, upon binding of a specific antigen, trigger the clonal expansion and differentiation of B lymphocytes into immunoglobulins-secreting plasma cells. Secreted immunoglobulins mediate the effector phase of humoral immunity, which results in the elimination of bound antigens. The antigen binding site is formed by the variable domain of one heavy chain, together with that of its associated light chain. Thus, each immunoglobulin has two antigen binding sites with remarkable affinity for a particular antigen. The variable domains are assembled by a process called V-(D)-J rearrangement and can then be subjected to somatic hypermutations which, after exposure to antigen and selection, allow affinity maturation for a particular antigen. This chain is Probable non-functional immunoglobulin kappa variable 3-7, found in Homo sapiens (Human).